A 252-amino-acid chain; its full sequence is CLAVATA3/ESR (CLE)-related protein 4A-1 (252 aa).

An N-terminal signal peptide occupies residues 1–21; it reads MAKNAMLCLLILRVVLALAFA. The tract at residues 21–83 is required for secretion from the host cytoplasm to the host apoplasm; the sequence is ATNKKGDEEP…SNQLPNNNWM (63 aa). A glycan (N-linked (GlcNAc...) asparagine) is linked at asparagine 32. Residues 116-252 are disordered; that stretch reads RKTGMHSQRH…APAGPDPIHH (137 aa). 2 stretches are compositionally biased toward basic and acidic residues: residues 125 to 137 and 144 to 242; these read HHEE…EKRV and PIHH…EKRG. Residues 127–135 form an A-1 repeat; that stretch reads EETTLEQEK. Residues 127–219 are 6 X approximate repeat A; the sequence is EETTLEQEKR…HEETTLEQEK (93 aa). A CLE-1 repeat occupies 136–147; that stretch reads RVAGAGPDPIHH. The 6 X approximate repeat CLE stretch occupies residues 136–252; the sequence is RVAGAGPDPI…APAGPDPIHH (117 aa). Residues 148–156 form an A-2 repeat; that stretch reads QDTTLEQEK. The stretch at 157–168 is one CLE-2 repeat; sequence RAVPAGPDPKHH. The stretch at 169-177 is one A-3 repeat; that stretch reads EETTLEQEK. The stretch at 178-189 is one CLE-3 repeat; sequence RAVPAGPDPKHH. The stretch at 190–198 is one A-4 repeat; it reads EETTLEQEK. Residues 199–210 form a CLE-4 repeat; sequence RAVPAGPDPKHH. One copy of the A-5 repeat lies at 211–219; it reads EETTLEQEK. The CLE-5 repeat unit spans residues 220 to 231; that stretch reads RAVPAGPDPKHH. One copy of the A-6 repeat lies at 232 to 240; that stretch reads EETTFEQEK. The CLE-6 repeat unit spans residues 241-252; it reads RGAPAGPDPIHH.

The protein belongs to the CLV3/ESR signal peptide family. As to expression, highly expressed exclusively within the dorsal esophageal gland cell during syncytium formation in host plants.

The protein resides in the secreted. It localises to the host cytoplasm. Its subcellular location is the host extracellular space. It is found in the extracellular space. The protein localises to the apoplast. In terms of biological role, mimics host plant CLE extracellular signal peptides that regulate cell fate. May play a role in the differentiation or division of feeding cells (syncytia) induced in plant roots during infection. The chain is CLAVATA3/ESR (CLE)-related protein 4A-1 (CLE-4A-1) from Globodera rostochiensis (Golden nematode worm).